The following is a 267-amino-acid chain: Undecaprenyl-diphosphatase (267 aa).

Transmembrane regions (helical) follow at residues 1–21 (MSLFHLILVALIQGITEFLPV), 40–60 (GQVIDVAVHVGTLGAVVLYFW), 85–105 (LAMGLIVATIPTVLAGAALHF), 111–131 (ALRSITVIGWTMLLFGLLLWW), 190–210 (MLMSIPTIIASGVLLGADVAV), 219–239 (DGAIAAAFAFVSALLALSLMM), and 245–265 (VSFTPYVIYRLALGLVLLGIA).

This sequence belongs to the UppP family.

The protein resides in the cell inner membrane. It carries out the reaction di-trans,octa-cis-undecaprenyl diphosphate + H2O = di-trans,octa-cis-undecaprenyl phosphate + phosphate + H(+). In terms of biological role, catalyzes the dephosphorylation of undecaprenyl diphosphate (UPP). Confers resistance to bacitracin. In Ruegeria pomeroyi (strain ATCC 700808 / DSM 15171 / DSS-3) (Silicibacter pomeroyi), this protein is Undecaprenyl-diphosphatase.